Here is a 53-residue protein sequence, read N- to C-terminus: uncharacterized protein (53 aa).

Low complexity predominate over residues Ser-14 to Ser-33. The interval Ser-14 to Phe-53 is disordered.

This is an uncharacterized protein from Dictyostelium discoideum (Social amoeba).